The following is a 300-amino-acid chain: Lysenin-related protein 1 (300 aa).

Residues Glu-12–Ser-35 are N-terminal cap domain. The beta-hairpin domain stretch occupies residues Val-36–Ile-109. The segment at Pro-110–Leu-158 is N-terminal cap domain. Residues Val-159–Asn-299 are C-terminal receptor-binding domain. 4 residues coordinate an N-(acyl)-sphingosylphosphocholine: Lys-187, Ser-229, Tyr-235, and Tyr-284. The cysteines at positions 274 and 285 are disulfide-linked.

Belongs to the lysenin family. As to quaternary structure, binds to sphingomyelin as a monomer by using its C-terminal domain. Forms a nonamer when sphingomyelin/LRP-1 ratio is lower than ca 500. Oligomerization, but not binding, is influenced by the fluidity of sphingomyelin. As to expression, expressed by coelomocytes.

The protein resides in the secreted. It localises to the target cell membrane. In terms of biological role, pore-forming toxin that specifically binds sphingomyelin in the plasma membrane of various cells. Has hemolytic activity. Binding and hemolytic activities of this toxin are 10 times less than those of lysenin and lysenin-related protein 2. The chain is Lysenin-related protein 1 from Eisenia fetida (Red wiggler worm).